We begin with the raw amino-acid sequence, 168 residues long: Cyanate hydratase (168 aa).

Catalysis depends on residues R94, E97, and S120.

Belongs to the cyanase family.

It catalyses the reaction cyanate + hydrogencarbonate + 3 H(+) = NH4(+) + 2 CO2. Catalyzes the reaction of cyanate with bicarbonate to produce ammonia and carbon dioxide. This chain is Cyanate hydratase, found in Oryza sativa subsp. indica (Rice).